Here is a 517-residue protein sequence, read N- to C-terminus: UDP-N-acetylmuramoyl-L-alanyl-D-glutamate--2,6-diaminopimelate ligase (517 aa).

L34 and S36 together coordinate UDP-N-acetyl-alpha-D-muramoyl-L-alanyl-D-glutamate. Position 122–128 (G122–T128) interacts with ATP. Residues T164–T165, S191, and R199 each bind UDP-N-acetyl-alpha-D-muramoyl-L-alanyl-D-glutamate. Residue K231 is modified to N6-carboxylysine. Residues R394, D418–R421, G476, and E480 each bind meso-2,6-diaminopimelate. The short motif at D418–R421 is the Meso-diaminopimelate recognition motif element.

The protein belongs to the MurCDEF family. MurE subfamily. Mg(2+) is required as a cofactor. Post-translationally, carboxylation is probably crucial for Mg(2+) binding and, consequently, for the gamma-phosphate positioning of ATP.

It is found in the cytoplasm. The catalysed reaction is UDP-N-acetyl-alpha-D-muramoyl-L-alanyl-D-glutamate + meso-2,6-diaminopimelate + ATP = UDP-N-acetyl-alpha-D-muramoyl-L-alanyl-gamma-D-glutamyl-meso-2,6-diaminopimelate + ADP + phosphate + H(+). Its pathway is cell wall biogenesis; peptidoglycan biosynthesis. Catalyzes the addition of meso-diaminopimelic acid to the nucleotide precursor UDP-N-acetylmuramoyl-L-alanyl-D-glutamate (UMAG) in the biosynthesis of bacterial cell-wall peptidoglycan. This Corynebacterium glutamicum (strain ATCC 13032 / DSM 20300 / JCM 1318 / BCRC 11384 / CCUG 27702 / LMG 3730 / NBRC 12168 / NCIMB 10025 / NRRL B-2784 / 534) protein is UDP-N-acetylmuramoyl-L-alanyl-D-glutamate--2,6-diaminopimelate ligase.